The following is a 63-amino-acid chain: Large ribosomal subunit protein bL28 (63 aa).

Belongs to the bacterial ribosomal protein bL28 family.

The polypeptide is Large ribosomal subunit protein bL28 (Mycoplasmopsis synoviae (strain 53) (Mycoplasma synoviae)).